The chain runs to 603 residues: Iron-sulfur clusters transporter ATM1, mitochondrial (603 aa).

Residues 20-41 traverse the membrane as a helical segment; it reads VLLAVGLLVGGKVLNVQVPFFF. Residues 20 to 310 form the ABC transmembrane type-1 domain; that stretch reads VLLAVGLLVG…LGSVYRELRQ (291 aa). The Mitochondrial intermembrane portion of the chain corresponds to 42 to 64; sequence REIVDSLNVDIAATGGTVATVAG. Residues 65–88 traverse the membrane as a helical segment; that stretch reads TMIFAYGASRIGAVVSQELRNAVF. Over 89–137 the chain is Mitochondrial matrix; sequence SSVAQKAIRRVATRTFGHLLNLDLNFHLSKQTGGLTRAIDRGTKGISFL. The helical transmembrane segment at 138–161 threads the bilayer; it reads LTSMVFHIVPTALEISMVCGILTY. Residue glutamine 162 is a topological domain, mitochondrial intermembrane. Residues 163-183 traverse the membrane as a helical segment; the sequence is FGWEFAAVTALTMSAYTAFTI. The Mitochondrial matrix segment spans residues 184–249; sequence WTTAWRTKFR…SSIKVATSLA (66 aa). Residues 189–193 and 252–255 contribute to the glutathione site; these read RTKFR and NSGQ. Residues 250–268 form a helical membrane-spanning segment; the sequence is FLNSGQNIIFSSALTIMMW. Over 269 to 283 the chain is Mitochondrial intermembrane; that stretch reads LGAKGIVAGSLSVGD. Residues 284–305 form a helical membrane-spanning segment; that stretch reads LVLINQLVFQLSVPLNFLGSVY. Glycine 302 is a binding site for glutathione. The Mitochondrial matrix segment spans residues 306–603; sequence RELRQSLLDM…SEREAPVPVK (298 aa). The ABC transporter domain maps to 345-581; sequence IRFDNVSFGY…NGLYTELWMA (237 aa). ATP-binding positions include tyrosine 354 and 378 to 389; that span reads GPSGCGKSTLLR.

It belongs to the ABC transporter superfamily. ABCB family. Heavy Metal importer (TC 3.A.1.210) subfamily. Homodimer.

It is found in the mitochondrion inner membrane. In terms of biological role, performs an essential function in the generation of cytoplasmic iron-sulfur proteins by mediating the ATP-dependent export of Fe/S cluster precursors synthesized by NFS1 and other mitochondrial proteins. Hydrolyzes ATP. Binds glutathione and may function by transporting a glutathione-conjugated iron-sulfur compound. The protein is Iron-sulfur clusters transporter ATM1, mitochondrial of Chaetomium globosum (strain ATCC 6205 / CBS 148.51 / DSM 1962 / NBRC 6347 / NRRL 1970) (Soil fungus).